A 61-amino-acid polypeptide reads, in one-letter code: 14-3-3-like protein (61 aa).

The protein belongs to the 14-3-3 family.

The chain is 14-3-3-like protein from Zea mays (Maize).